The sequence spans 151 residues: Ribosomal RNA large subunit methyltransferase H (151 aa).

Residues Leu73, Gly100, and 119-124 each bind S-adenosyl-L-methionine; that span reads LSDLTM.

The protein belongs to the RNA methyltransferase RlmH family. Homodimer.

It localises to the cytoplasm. It catalyses the reaction pseudouridine(1915) in 23S rRNA + S-adenosyl-L-methionine = N(3)-methylpseudouridine(1915) in 23S rRNA + S-adenosyl-L-homocysteine + H(+). Functionally, specifically methylates the pseudouridine at position 1915 (m3Psi1915) in 23S rRNA. This is Ribosomal RNA large subunit methyltransferase H from Aliarcobacter butzleri (strain RM4018) (Arcobacter butzleri).